The following is a 555-amino-acid chain: Glutamine--tRNA ligase (555 aa).

A 'HIGH' region motif is present at residues 34 to 44; that stretch reads PEPNGYLHIGH. ATP is bound by residues 35 to 37 and 41 to 47; these read EPN and HIGHAKS. Residues aspartate 67 and tyrosine 212 each coordinate L-glutamine. Residues threonine 231, 261–262, and 269–271 contribute to the ATP site; these read RL and MSK. Residues 268-272 carry the 'KMSKS' region motif; sequence IMSKR.

This sequence belongs to the class-I aminoacyl-tRNA synthetase family. Monomer.

The protein resides in the cytoplasm. The enzyme catalyses tRNA(Gln) + L-glutamine + ATP = L-glutaminyl-tRNA(Gln) + AMP + diphosphate. The polypeptide is Glutamine--tRNA ligase (Yersinia enterocolitica serotype O:8 / biotype 1B (strain NCTC 13174 / 8081)).